The following is a 227-amino-acid chain: uncharacterized protein (227 aa).

Residues 1-21 (MELKKIAVGLTALLGMSVANA) form the signal peptide.

This is an uncharacterized protein from Haemophilus influenzae (strain ATCC 51907 / DSM 11121 / KW20 / Rd).